A 503-amino-acid chain; its full sequence is CDK5 regulatory subunit-associated protein 3 (503 aa).

Short sequence motifs (shuffled ATG8-binding motif) lie at residues 266-269, 288-291, and 306-309; these read IDWG. The required for interaction with UFL1 and mediates interaction with CHEK1 stretch occupies residues 268–503; the sequence is WGDFGVEAVS…RPVNLMGTSL (236 aa). The interval 352-367 is RPL10a-binding domain (RBD); that stretch reads DELMELEIFLSQRAVE. Lysine 447 is covalently cross-linked (Glycyl lysine isopeptide (Lys-Gly) (interchain with G-Cter in SUMO2)).

Belongs to the CDK5RAP3 family. Substrate adapter component of the UFM1 ribosome E3 ligase (UREL) complex, composed of UFL1, DDRGK1 and CDK5RAP3. Interaction with UFL1 anchors CDK5RAP3 in the cytoplasm, preventing its translocation to the nucleus which allows expression of the CCND1 cyclin and progression of cells through the G1/S transition. Interacts with ATG8 family proteins MAP1LC3A, MAP1LC3B, GABARAP, GABARAPL1 and GABARAPL2. Interacts with CDK5R1; competes with CDK5RAP1 and CDK5RAP2. Interacts with RELA. Interacts with CHEK1; may negatively regulate CHEK1 and thereby stimulate entry into mitosis. Interacts with CDKN2A/ARF and MDM2; forms a ternary complex involved in regulation of p53/TP53. Interacts with MAPK14. Interacts with CCNB1. Interacts with TUBG1; may regulate CDK5RAP3 in mitotic G2/M transition checkpoint. Post-translationally, may be phosphorylated by CDK5. Ubiquitinated. Probably triggers proteasomal degradation and is negatively regulated by UFL1. In terms of processing, may be ufmylated. Post-translationally, cleaved by caspases early during apoptosis, the resulting peptides may play a role in rupture of the nuclear envelope. Widely expressed with higher expression in secretory tissues.

The protein localises to the endoplasmic reticulum membrane. Its subcellular location is the cytoplasm. It is found in the nucleus. The protein resides in the cytoskeleton. It localises to the microtubule organizing center. The protein localises to the centrosome. Functionally, substrate adapter of E3 ligase complexes mediating ufmylation, the covalent attachment of the ubiquitin-like modifier UFM1 to substrate proteins, and which is involved in various processes, such as ribosome recycling and reticulophagy (also called ER-phagy). As part of the UREL complex, plays a key role in ribosome recycling by promoting mono-ufmylation of RPL26/uL24 subunit of the 60S ribosome. Ufmylation of RPL26/uL24 occurs on free 60S ribosomes following ribosome dissociation: it weakens the junction between post-termination 60S subunits and SEC61 translocons, promoting release and recycling of the large ribosomal subunit from the endoplasmic reticulum membrane. Ufmylation of RPL26/uL24 and subsequent 60S ribosome recycling either take place after normal termination of translation or after ribosome stalling during cotranslational translocation at the endoplasmic reticulum. Within the UREL complex, CDK5RAP3 acts as a substrate adapter that constrains UFL1 ligase activity to mono-ufmylate RPL26/uL24 at 'Lys-134'. The UREL complex is also involved in reticulophagy in response to endoplasmic reticulum stress by promoting ufmylation of proteins such as CYB5R3, thereby promoting lysosomal degradation of ufmylated proteins. Also acts as a regulator of transcription: negatively regulates NF-kappa-B-mediated gene transcription through the control of RELA phosphorylation. Also regulates mitotic G2/M transition checkpoint and mitotic G2 DNA damage checkpoint. Through its interaction with CDKN2A/ARF and MDM2 may induce MDM2-dependent p53/TP53 ubiquitination, stabilization and activation in the nucleus, thereby promoting G1 cell cycle arrest and inhibition of cell proliferation. May also play a role in the rupture of the nuclear envelope during apoptosis. May regulate MAPK14 activity by regulating its dephosphorylation by PPM1D/WIP1. Required for liver development. This Mus musculus (Mouse) protein is CDK5 regulatory subunit-associated protein 3.